Here is a 282-residue protein sequence, read N- to C-terminus: Bifunctional protein FolD (282 aa).

Residues 165-167 (GAS) and Ile-231 each bind NADP(+).

The protein belongs to the tetrahydrofolate dehydrogenase/cyclohydrolase family. Homodimer.

It catalyses the reaction (6R)-5,10-methylene-5,6,7,8-tetrahydrofolate + NADP(+) = (6R)-5,10-methenyltetrahydrofolate + NADPH. The catalysed reaction is (6R)-5,10-methenyltetrahydrofolate + H2O = (6R)-10-formyltetrahydrofolate + H(+). It participates in one-carbon metabolism; tetrahydrofolate interconversion. In terms of biological role, catalyzes the oxidation of 5,10-methylenetetrahydrofolate to 5,10-methenyltetrahydrofolate and then the hydrolysis of 5,10-methenyltetrahydrofolate to 10-formyltetrahydrofolate. In Francisella tularensis subsp. mediasiatica (strain FSC147), this protein is Bifunctional protein FolD.